The chain runs to 298 residues: Mitochondrial substrate carrier family protein N (298 aa).

The Mitochondrial intermembrane portion of the chain corresponds to 1–13 (MAGDLTPSLFLKY). 3 Solcar repeats span residues 8 to 92 (SLFL…FKKT), 104 to 188 (FRIP…TAEN), and 207 to 290 (QKLS…IKQM). The helical transmembrane segment at 14 to 34 (GFGGALSCSITHSLVVPLDVV) threads the bilayer. Residues 35 to 60 (KTLLQTNPGKYTGMMNGFSTVIKEQG) are Mitochondrial matrix-facing. The helical transmembrane segment at 61 to 81 (PSGLLQGLGPTAVGYALQGFL) threads the bilayer. Residues 82–105 (KFGFYEVFKKTYADAVGEKADQFR) are Mitochondrial intermembrane-facing. A helical transmembrane segment spans residues 106 to 126 (IPIWLAASATAEVIADIALCP). Residues 127–162 (NEAVRIRLVAEPTFAKSPVEAFGKIFKQEGVLGFYK) lie on the Mitochondrial matrix side of the membrane. A helical transmembrane segment spans residues 163 to 179 (GLPPILLKQVPYTMAKF). Residues 180–208 (AVFEFTAENVYKGLAASGKPKESLTDGQK) are Mitochondrial intermembrane-facing. A helical membrane pass occupies residues 209–229 (LSVSLGSGIVAGIVAAIVSQP). Residues 230 to 262 (ADTILSKINQEKTDGGVVKAIGNIMRRLGVRGL) lie on the Mitochondrial matrix side of the membrane. A helical transmembrane segment spans residues 263–283 (FLGLPTRCFMVGTLTAGQFFI). Residues 284–298 (YDGIKQMLGLTPAKK) are Mitochondrial intermembrane-facing.

It belongs to the mitochondrial carrier (TC 2.A.29) family.

The protein resides in the mitochondrion inner membrane. In terms of biological role, mitochondrial solute carriers shuttle metabolites, nucleotides, and cofactors through the mitochondrial inner membrane. Transports phosphate groups from the cytosol to the mitochondrial matrix. Phosphate is cotransported with H(+). The protein is Mitochondrial substrate carrier family protein N (mcfN) of Dictyostelium discoideum (Social amoeba).